A 339-amino-acid chain; its full sequence is Pyrimidine monooxygenase RutA (339 aa).

FMN is bound by residues 26-27 (IK), Asn-92, Glu-101, 117-118 (RY), and Ser-167.

It belongs to the NtaA/SnaA/DszA monooxygenase family. RutA subfamily.

The enzyme catalyses uracil + FMNH2 + NADH + O2 = (Z)-3-ureidoacrylate + FMN + NAD(+) + H2O + H(+). The catalysed reaction is thymine + FMNH2 + NADH + O2 = (Z)-2-methylureidoacrylate + FMN + NAD(+) + H2O + H(+). In terms of biological role, catalyzes the pyrimidine ring opening between N-3 and C-4 by an unusual flavin hydroperoxide-catalyzed mechanism, adding oxygen atoms in the process to yield ureidoacrylate peracid, that immediately reacts with FMN forming ureidoacrylate and FMN-N(5)-oxide. The FMN-N(5)-oxide reacts spontaneously with NADH to produce FMN. Requires the flavin reductase RutF to regenerate FMN in vivo. This chain is Pyrimidine monooxygenase RutA, found in Cronobacter sakazakii (strain ATCC BAA-894) (Enterobacter sakazakii).